Here is a 298-residue protein sequence, read N- to C-terminus: HTH-type transcriptional regulator ArgP (298 aa).

In terms of domain architecture, HTH lysR-type spans 4–60 (LDYRWIEALDSVVSKGSFERAAEQLFISQSAVSQRIKQLEKYLAQPVLIREQPPRPT). The segment at residues 21 to 40 (FERAAEQLFISQSAVSQRIK) is a DNA-binding region (H-T-H motif).

The protein belongs to the LysR transcriptional regulatory family. Homodimer.

Controls the transcription of genes involved in arginine and lysine metabolism. The polypeptide is HTH-type transcriptional regulator ArgP (Vibrio cholerae serotype O1 (strain ATCC 39541 / Classical Ogawa 395 / O395)).